Consider the following 889-residue polypeptide: DNA mismatch repair protein MutS (889 aa).

620 to 627 (GPNMAGKS) serves as a coordination point for ATP. A disordered region spans residues 812-831 (AAAPSGAARRGRPAREKEPG).

The protein belongs to the DNA mismatch repair MutS family.

In terms of biological role, this protein is involved in the repair of mismatches in DNA. It is possible that it carries out the mismatch recognition step. This protein has a weak ATPase activity. In Syntrophobacter fumaroxidans (strain DSM 10017 / MPOB), this protein is DNA mismatch repair protein MutS.